Consider the following 268-residue polypeptide: Formamidopyrimidine-DNA glycosylase (268 aa).

The Schiff-base intermediate with DNA role is filled by P2. The active-site Proton donor is E3. Catalysis depends on K56, which acts as the Proton donor; for beta-elimination activity. 3 residues coordinate DNA: H91, R110, and R149. The segment at 234–268 (QVYGRFNQACPNCGQPLKRSRIGGRSSHYCEKCQQ) adopts an FPG-type zinc-finger fold. The Proton donor; for delta-elimination activity role is filled by R258.

This sequence belongs to the FPG family. In terms of assembly, monomer. The cofactor is Zn(2+).

The enzyme catalyses Hydrolysis of DNA containing ring-opened 7-methylguanine residues, releasing 2,6-diamino-4-hydroxy-5-(N-methyl)formamidopyrimidine.. The catalysed reaction is 2'-deoxyribonucleotide-(2'-deoxyribose 5'-phosphate)-2'-deoxyribonucleotide-DNA = a 3'-end 2'-deoxyribonucleotide-(2,3-dehydro-2,3-deoxyribose 5'-phosphate)-DNA + a 5'-end 5'-phospho-2'-deoxyribonucleoside-DNA + H(+). In terms of biological role, involved in base excision repair of DNA damaged by oxidation or by mutagenic agents. Acts as a DNA glycosylase that recognizes and removes damaged bases. Has a preference for oxidized purines, such as 7,8-dihydro-8-oxoguanine (8-oxoG). Has AP (apurinic/apyrimidinic) lyase activity and introduces nicks in the DNA strand. Cleaves the DNA backbone by beta-delta elimination to generate a single-strand break at the site of the removed base with both 3'- and 5'-phosphates. This chain is Formamidopyrimidine-DNA glycosylase, found in Syntrophomonas wolfei subsp. wolfei (strain DSM 2245B / Goettingen).